A 673-amino-acid polypeptide reads, in one-letter code: ATP-dependent DNA helicase Rep (673 aa).

The region spanning 1–280 is the UvrD-like helicase ATP-binding domain; the sequence is MRLNPGQQQA…IKLEQNYRSS (280 aa). Residues 22-29 and arginine 278 contribute to the ATP site; that span reads AGAGSGKT. In terms of domain architecture, UvrD-like helicase C-terminal spans 281–562; sequence GRILKAANIL…QLMTLHASKG (282 aa).

It belongs to the helicase family. UvrD subfamily. In terms of assembly, homodimer in association with DNA.

It catalyses the reaction Couples ATP hydrolysis with the unwinding of duplex DNA by translocating in the 3'-5' direction.. It carries out the reaction ATP + H2O = ADP + phosphate + H(+). Its activity is regulated as follows. Binding to DNA induces dimerization, which is required for DNA helicase activity. Helicase activity is stimulated by PriC. Rep helicase is a single-stranded (ss)DNA-dependent ATPase involved in DNA replication; it can initiate unwinding at a nick in the DNA. It binds to ssDNA and acts in a progressive fashion along the DNA in the 3' to 5' direction. Binds double-stranded (ds)DNA with a 5' ss- but not 3' ss-extension and forked structures with either lagging or leading ssDNA. Part of the PriC-Rep pathway for restart of stalled replication forks, which reloads the DnaB replicative helicase on sites other than the origin of replication. The polypeptide is ATP-dependent DNA helicase Rep (Escherichia coli (strain K12)).